A 481-amino-acid chain; its full sequence is Guanine nucleotide exchange factor C9orf72 (481 aa).

The uDENN C9ORF72-type domain maps to 23-194 (SPLLAATFAY…ELLSSMKSHS (172 aa)). In terms of domain architecture, cDENN C9ORF72-type spans 200–343 (DIADTVLNDD…SELTAFWRAT (144 aa)). One can recognise a dDENN C9ORF72-type domain in the interval 370–464 (VLHRDTLVKA…IKPGLHSFIF (95 aa)). The required for the homodimerization of the C9orf72-SMCR8 complex stretch occupies residues 461 to 481 (SFIFGRPFYTSVQERDVLMTF).

In terms of assembly, component of the C9orf72-SMCR8 complex, at least composed of C9orf72, SMCR8 and WDR41. The complex is formed of two protomers, each individually consisting of one molecule each of C9orf72, SMCR8 and WDR41. The protomers homodimerize via an interaction between C9orf72 (via C-terminus) and SMCR8 (via N-terminus). Within each protomer SMCR8 (via DENN domain) acts as a bridging protein between WDR41 (via C-terminus and N-terminus) and C9orf72 (via C-terminus). The C9orf72-SMCR8 complex associates with the ULK1/ATG1 kinase complex. Interacts with ULK1/ATG1 kinase complex members ULK1, ATG13 and RB1CC1. Interacts with SMCR8; the interaction is direct. Interacts with HNRNPA1, HNRNPA2B1 and UBQLN2. Interacts with small Rab GTPase RAB1A; the interaction mediates recruitment of RAB1A to the ULK1/ATG1 kinase complex. Also interacts with small Rab GTPase RAB7A. Interacts with cofilin. Interacts with GTP-binding proteins ARF1 and ARF6. Interacts with the DLG4/PSD-95. Interacts with CARM1 (via PH domain-like fold). Interacts with RAB39A and RAB39B (in GDP-bound forms); functions as GEF for RAB39A and RAB39B. Both isoforms are widely expressed, including kidney, lung, liver, heart, testis and several brain regions, such as cerebellum. Also expressed in the frontal cortex and in lymphoblasts (at protein level).

Its subcellular location is the cytoplasm. The protein resides in the nucleus. It is found in the P-body. The protein localises to the stress granule. It localises to the endosome. Its subcellular location is the lysosome. The protein resides in the cytoplasmic vesicle. It is found in the autophagosome. The protein localises to the autolysosome. It localises to the secreted. Its subcellular location is the cell projection. The protein resides in the axon. It is found in the growth cone. The protein localises to the perikaryon. It localises to the dendrite. Its subcellular location is the presynapse. The protein resides in the postsynapse. It is found in the nucleus membrane. Functionally, acts as a guanine-nucleotide releasing factor (GEF) for Rab GTPases by promoting the conversion of inactive RAB-GDP to the active form RAB-GTP. Acts as a GEF for RAB39A which enables HOPS-mediated autophagosome-lysosome membrane tethering and fusion in mammalian autophagy. Component of the C9orf72-SMCR8 complex where both subunits display GEF activity and that regulates autophagy. As part of the C9orf72-SMCR8-WDR41 (CSW) complex, functions as GEF for RAB8A and RAB39B, thereby promoting autophagosome maturation. As part of the C9orf72-SMCR8 complex, also functions as GTPase activating protein (GAP) for RAB8A and RAB11A in vitro. The C9orf72-SMCR8 complex also acts as a regulator of autophagy initiation by interacting with the ULK1/ATG1 kinase complex and modulating its protein kinase activity. Promotes initiation of autophagy by regulating the RAB1A-dependent trafficking of the ULK1/ATG1 kinase complex to the phagophore which leads to autophagosome formation. Acts as a regulator of mTORC1 signaling by promoting phosphorylation of mTORC1 substrates. Plays a role in endosomal trafficking. May be involved in regulating the maturation of phagosomes to lysosomes. Promotes the lysosomal localization and lysosome-mediated degradation of CARM1 which leads to inhibition of starvation-induced lipid metabolism. Regulates actin dynamics in motor neurons by inhibiting the GTP-binding activity of ARF6, leading to ARF6 inactivation. This reduces the activity of the LIMK1 and LIMK2 kinases which are responsible for phosphorylation and inactivation of cofilin, leading to CFL1/cofilin activation. Positively regulates axon extension and axon growth cone size in spinal motor neurons. Required for SMCR8 protein expression and localization at pre- and post-synaptic compartments in the forebrain, also regulates protein abundance of RAB3A and GRIA1/GLUR1 in post-synaptic compartments in the forebrain and hippocampus. Plays a role within the hematopoietic system in restricting inflammation and the development of autoimmunity. In terms of biological role, regulates stress granule assembly in response to cellular stress. Does not play a role in regulation of stress granule assembly in response to cellular stress. In Homo sapiens (Human), this protein is Guanine nucleotide exchange factor C9orf72.